Here is a 273-residue protein sequence, read N- to C-terminus: Zinc finger protein AZF2 (273 aa).

Positions 33–64 (LKRKRSKRQRSHSPSSSSSSPPRSRPKSQNQD) are disordered. Residues 34–43 (KRKRSKRQRS) show a composition bias toward basic residues. A compositionally biased stretch (low complexity) spans 44 to 54 (HSPSSSSSSPP). C2H2-type zinc fingers lie at residues 106–128 (YKCNVCEKAFPSYQALGGHKASH) and 165–187 (HECSICHKVFPTGQALGGHKRCH). The interval 195 to 215 (GGGGGSKSISHSGSVSSTVSE) is disordered. Over residues 201 to 213 (KSISHSGSVSSTV) the composition is skewed to low complexity.

Expressed in roots, radicles, cotyledons, hypocotyls, leaf veins, stems, sepals, petals, stamens, placenta, funiculi and maturated seeds.

The protein resides in the nucleus. In terms of biological role, transcriptional repressor involved in the inhibition of plant growth under abiotic stress conditions. Can repress the expression of various genes, including osmotic stress and abscisic acid-repressive genes and auxin-inducible genes, by binding to their promoter regions in a DNA sequence-specific manner. Acts as a negative regulator of abscisic acid (ABA) signaling during seed germination. Probably involved in jasmonate (JA) early signaling response. May regulate the expression of the JA biosynthesis gene LOX3 and control the expression of TIFY10A/JAZ1, a key repressor in the JA signaling cascade. May act as a positive regulator of leaf senescence. Has been identified as a suppressor of the deficiency of yeast snf4 mutant to grow on non-fermentable carbon source. This Arabidopsis thaliana (Mouse-ear cress) protein is Zinc finger protein AZF2 (AZF2).